The sequence spans 243 residues: uncharacterized protein (243 aa).

The tract at residues 71–120 (KRTNVSQRNRKKGIKNNRPHKDINSSPDWGNAHRGTDWQSEKANGMNRAK) is disordered. Positions 78 to 88 (RNRKKGIKNNR) are enriched in basic residues. Ser96 is modified (phosphoserine).

This is an uncharacterized protein from Saccharomyces cerevisiae (strain ATCC 204508 / S288c) (Baker's yeast).